We begin with the raw amino-acid sequence, 309 residues long: HPr kinase/phosphorylase (309 aa).

Residues His138 and Lys159 contribute to the active site. Residue 153–160 (GKSGVGKS) participates in ATP binding. Ser160 lines the Mg(2+) pocket. The active-site Proton acceptor; for phosphorylation activity. Proton donor; for dephosphorylation activity is Asp177. The interval 201–210 (LEIRGLGIIN) is important for the catalytic mechanism of both phosphorylation and dephosphorylation. Glu202 is a binding site for Mg(2+). Residue Arg243 is part of the active site. Residues 264 to 269 (PVRPGR) are important for the catalytic mechanism of dephosphorylation.

Belongs to the HPrK/P family. Homohexamer. Requires Mg(2+) as cofactor.

The catalysed reaction is [HPr protein]-L-serine + ATP = [HPr protein]-O-phospho-L-serine + ADP + H(+). It catalyses the reaction [HPr protein]-O-phospho-L-serine + phosphate + H(+) = [HPr protein]-L-serine + diphosphate. In terms of biological role, catalyzes the ATP- as well as the pyrophosphate-dependent phosphorylation of a specific serine residue in HPr, a phosphocarrier protein of the phosphoenolpyruvate-dependent sugar phosphotransferase system (PTS). HprK/P also catalyzes the pyrophosphate-producing, inorganic phosphate-dependent dephosphorylation (phosphorolysis) of seryl-phosphorylated HPr (P-Ser-HPr). The two antagonistic activities of HprK/P are regulated by several intracellular metabolites, which change their concentration in response to the absence or presence of rapidly metabolisable carbon sources (glucose, fructose, etc.) in the growth medium. Also phosphorylates/dephosphorylates the HPr-like catabolite repression protein crh on a specific serine residue. Therefore, by controlling the phosphorylation state of HPr and crh, HPrK/P is a sensor enzyme that plays a major role in the regulation of carbon metabolism and sugar transport: it mediates carbon catabolite repression (CCR), and regulates PTS-catalyzed carbohydrate uptake and inducer exclusion. The polypeptide is HPr kinase/phosphorylase (Geobacillus thermodenitrificans (strain NG80-2)).